The chain runs to 156 residues: Arginine repressor (156 aa).

This sequence belongs to the ArgR family.

It localises to the cytoplasm. The protein operates within amino-acid biosynthesis; L-arginine biosynthesis [regulation]. Regulates arginine biosynthesis genes. The sequence is that of Arginine repressor from Citrobacter koseri (strain ATCC BAA-895 / CDC 4225-83 / SGSC4696).